The chain runs to 301 residues: MKIAVLSRNPRLYSTRRLVEAGVERGHEMVVIDTLRAYMNIASHKPQIHYRGKPLEGFDAVIPRIGASVTFYGCAVLRQFEMMGVFPLNESVAIARSRDKLRSLQLLSRRGIGLPVTGFAHSPDDIPDLIDMVNGAPLVIKVLEGTQGIGVVLCETATAAESVIEAFMGLKQNIMVQEYIKEAGGADIRCFVVGDKVIAAMKRQAKPGEFRSNLHRGGSASLIKITPEERMTALRAAKVMGLSVAGVDILRSNHGPLVMEVNSSPGLEGIETTTGKNVAGIIIEHLEKNGGPNMTRTKGKG.

An ATP-grasp domain is found at 104–287; it reads LQLLSRRGIG…VAGIIIEHLE (184 aa). ATP is bound by residues Lys-141, 178–179, Asp-187, and 211–213; these read EY and RSN. Mg(2+)-binding residues include Asp-248, Glu-260, and Asn-262. Asp-248, Glu-260, and Asn-262 together coordinate Mn(2+).

It belongs to the RimK family. It depends on Mg(2+) as a cofactor. Mn(2+) is required as a cofactor.

The protein is Probable alpha-L-glutamate ligase of Pseudomonas fluorescens (strain SBW25).